The following is a 392-amino-acid chain: NAD(P)H-quinone oxidoreductase subunit H, chloroplastic (392 aa).

The protein belongs to the complex I 49 kDa subunit family. As to quaternary structure, NDH is composed of at least 16 different subunits, 5 of which are encoded in the nucleus.

It is found in the plastid. It localises to the chloroplast thylakoid membrane. The catalysed reaction is a plastoquinone + NADH + (n+1) H(+)(in) = a plastoquinol + NAD(+) + n H(+)(out). The enzyme catalyses a plastoquinone + NADPH + (n+1) H(+)(in) = a plastoquinol + NADP(+) + n H(+)(out). NDH shuttles electrons from NAD(P)H:plastoquinone, via FMN and iron-sulfur (Fe-S) centers, to quinones in the photosynthetic chain and possibly in a chloroplast respiratory chain. The immediate electron acceptor for the enzyme in this species is believed to be plastoquinone. Couples the redox reaction to proton translocation, and thus conserves the redox energy in a proton gradient. The chain is NAD(P)H-quinone oxidoreductase subunit H, chloroplastic from Marchantia polymorpha (Common liverwort).